An 80-amino-acid polypeptide reads, in one-letter code: Putative membrane protein insertion efficiency factor (80 aa).

Residues 60 to 80 (SKTGKDPVPDRFSLKRNQEGE) are disordered. The span at 62–80 (TGKDPVPDRFSLKRNQEGE) shows a compositional bias: basic and acidic residues.

The protein belongs to the UPF0161 family.

The protein localises to the cell membrane. Functionally, could be involved in insertion of integral membrane proteins into the membrane. The chain is Putative membrane protein insertion efficiency factor from Streptococcus pneumoniae serotype 4 (strain ATCC BAA-334 / TIGR4).